The chain runs to 510 residues: NAD(P)H-quinone oxidoreductase subunit 2 B, chloroplastic (510 aa).

Transmembrane regions (helical) follow at residues 24–44 (LLLFDGSFIFPECILIFGLIL), 57–77 (IPWLYFISSTSLVMSITALLF), 99–119 (IFQFLILLCSTLCIPLSVEYI), 124–144 (MAIAEFLLFVLTATLGGMFLC), 149–169 (LITIFVAPECFSLCSYLLSGY), 183–203 (YLLMGGASSSILVHGFSWLYG), 227–247 (PGISIALIFITVGIGFKLSPA), 295–315 (WHLLLEILAILSMILGNLIAI), 323–343 (MLAYSSIGQIGYVIIGIIVGD), 354–374 (YMLFYISMNLGTFACIVLFGL), 395–415 (ALSLALCLLSLGGLPPLAGFF), 418–438 (LHLFWCGWQAGLYFLVSIGLL), and 484–504 (MIVCVIASTIPGISMNPIIAI).

Belongs to the complex I subunit 2 family. In terms of assembly, NDH is composed of at least 16 different subunits, 5 of which are encoded in the nucleus.

It is found in the plastid. The protein resides in the chloroplast thylakoid membrane. It catalyses the reaction a plastoquinone + NADH + (n+1) H(+)(in) = a plastoquinol + NAD(+) + n H(+)(out). It carries out the reaction a plastoquinone + NADPH + (n+1) H(+)(in) = a plastoquinol + NADP(+) + n H(+)(out). Functionally, NDH shuttles electrons from NAD(P)H:plastoquinone, via FMN and iron-sulfur (Fe-S) centers, to quinones in the photosynthetic chain and possibly in a chloroplast respiratory chain. The immediate electron acceptor for the enzyme in this species is believed to be plastoquinone. Couples the redox reaction to proton translocation, and thus conserves the redox energy in a proton gradient. This is NAD(P)H-quinone oxidoreductase subunit 2 B, chloroplastic from Gossypium hirsutum (Upland cotton).